Here is a 601-residue protein sequence, read N- to C-terminus: Glutamine--fructose-6-phosphate aminotransferase [isomerizing] (601 aa).

Cys-2 (nucleophile; for GATase activity) is an active-site residue. A Glutamine amidotransferase type-2 domain is found at 2-216; sequence CGIVGYIGTN…DKEIVIVTKD (215 aa). 2 consecutive SIS domains span residues 282–421 and 453–591; these read IIDE…EIGD and IAGE…VDKP. Lys-596 acts as the For Fru-6P isomerization activity in catalysis.

In terms of assembly, homodimer.

It is found in the cytoplasm. The catalysed reaction is D-fructose 6-phosphate + L-glutamine = D-glucosamine 6-phosphate + L-glutamate. Catalyzes the first step in hexosamine metabolism, converting fructose-6P into glucosamine-6P using glutamine as a nitrogen source. The sequence is that of Glutamine--fructose-6-phosphate aminotransferase [isomerizing] from Listeria monocytogenes serovar 1/2a (strain ATCC BAA-679 / EGD-e).